Consider the following 1435-residue polypeptide: Nitric oxide synthase 1 (1435 aa).

The interval 1 to 206 (MEEHVFGVQQ…LQGSGDKNEL (206 aa)) is interaction with NOSIP. One can recognise a PDZ domain in the interval 17–99 (SVRLFKRKVG…ETHVVLILRG (83 aa)). Disordered regions lie at residues 110-201 (TFTG…QGSG) and 277-304 (NNPY…SKCP). The segment at 164 to 246 (QGHGQEAGSP…TGVQVDRDFD (83 aa)) is interaction with DYNLL1/PIN. Over residues 290–300 (GKQSPTKNGSP) the composition is skewed to polar residues. Serine 340 contacts (6R)-L-erythro-5,6,7,8-tetrahydrobiopterin. A heme b-binding site is contributed by cysteine 421. Positions 484, 593, 594, and 598 each coordinate L-arginine. (6R)-L-erythro-5,6,7,8-tetrahydrobiopterin contacts are provided by valine 683, tryptophan 684, and phenylalanine 697. Tyrosine 712 serves as a coordination point for heme b. The interval 731-751 (KRRAIGFKKLAEAVKFSAKLM) is calmodulin-binding. Residues 761–941 (ATILYATETG…AFRTWAKKVF (181 aa)) form the Flavodoxin-like domain. Residues threonine 767, glutamate 768, threonine 769, lysine 771, serine 772, serine 813, threonine 814, and glycine 818 each contribute to the FMN site. Residues serine 853, serine 863, and serine 864 each carry the phosphoserine modification. Residues serine 892, histidine 897, cysteine 899, glutamate 925, and glutamine 929 each contribute to the FMN site. The FAD-binding FR-type domain occupies 996–1243 (KRVSAARLLS…VRGAPSFRLP (248 aa)). Arginine 1016 is a binding site for NADP(+). Histidine 1038, arginine 1179, tyrosine 1180, tyrosine 1181, serine 1182, threonine 1197, and alanine 1199 together coordinate FAD. NADP(+) is bound at residue serine 1202. FAD contacts are provided by tyrosine 1203, valine 1216, cysteine 1217, and serine 1218. Threonine 1257, arginine 1290, serine 1319, arginine 1320, lysine 1326, tyrosine 1328, glutamine 1330, aspartate 1363, threonine 1404, and arginine 1406 together coordinate NADP(+).

The protein belongs to the NOS family. In terms of assembly, homodimer. Interacts with DLG4; the interaction possibly being prevented by the association between NOS1 and CAPON. Forms a ternary complex with CAPON and RASD1. Forms a ternary complex with CAPON and SYN1. Interacts with ZDHHC23. Interacts with NOSIP; which may impair its synaptic location. Interacts with HTR4. Interacts with SLC6A4. Interacts with VAC14. Interacts (via N-terminal domain) with DLG4 (via N-terminal tandem pair of PDZ domains). Interacts with SLC6A4. Forms a complex with ASL, ASS1 and SLC7A1; the complex regulates cell-autonomous L-arginine synthesis and citrulline recycling while channeling extracellular L-arginine to nitric oxide synthesis pathway. Interacts with DMD; localizes NOS1 to sarcolemma in muscle cells. Interacts with DYNLL1; inhibits the nitric oxide synthase activity. Requires heme b as cofactor. The cofactor is FAD. FMN is required as a cofactor. (6R)-L-erythro-5,6,7,8-tetrahydrobiopterin serves as cofactor. In terms of processing, ubiquitinated; mediated by STUB1/CHIP in the presence of Hsp70 and Hsp40 (in vitro).

It localises to the cell membrane. The protein resides in the sarcolemma. Its subcellular location is the cell projection. It is found in the dendritic spine. The catalysed reaction is 2 L-arginine + 3 NADPH + 4 O2 + H(+) = 2 L-citrulline + 2 nitric oxide + 3 NADP(+) + 4 H2O. With respect to regulation, stimulated by calcium/calmodulin. Inhibited by DYNLL1 that prevents the dimerization of the protein. Inhibited by NOSIP. Produces nitric oxide (NO) which is a messenger molecule with diverse functions throughout the body. In the brain and peripheral nervous system, NO displays many properties of a neurotransmitter. Probably has nitrosylase activity and mediates cysteine S-nitrosylation of cytoplasmic target proteins such SRR. In Oryctolagus cuniculus (Rabbit), this protein is Nitric oxide synthase 1 (NOS1).